A 247-amino-acid polypeptide reads, in one-letter code: Uridylate kinase (247 aa).

14-17 (KLSG) contributes to the ATP binding site. Residues 22 to 27 (GERGVG) are involved in allosteric activation by GTP. G56 provides a ligand contact to UMP. ATP contacts are provided by G57 and R61. Residues D76 and 137–144 (IGSPYFST) each bind UMP. Residues N165, Y171, and D174 each contribute to the ATP site.

The protein belongs to the UMP kinase family. In terms of assembly, homohexamer.

Its subcellular location is the cytoplasm. It carries out the reaction UMP + ATP = UDP + ADP. The protein operates within pyrimidine metabolism; CTP biosynthesis via de novo pathway; UDP from UMP (UMPK route): step 1/1. Allosterically activated by GTP. Inhibited by UTP. Its function is as follows. Catalyzes the reversible phosphorylation of UMP to UDP. The protein is Uridylate kinase of Streptococcus pneumoniae (strain ATCC BAA-255 / R6).